We begin with the raw amino-acid sequence, 510 residues long: NAD(P)H-quinone oxidoreductase subunit 2 B, chloroplastic (510 aa).

Transmembrane regions (helical) follow at residues 24 to 44 (LLLF…GLIL), 57 to 77 (IPWL…ALLF), 99 to 119 (IFQF…VEYI), 124 to 144 (MAIT…MFLC), 149 to 169 (LITI…LSGY), 183 to 203 (YLLM…WLYG), 227 to 247 (PGIS…LSPA), 295 to 315 (WHLL…LIAI), 323 to 343 (MLAY…IVGD), 354 to 374 (YMLF…LFGL), 395 to 415 (ALSL…AGFF), 418 to 438 (LYLF…IGLL), and 484 to 504 (MIVC…IIAI).

It belongs to the complex I subunit 2 family. As to quaternary structure, NDH is composed of at least 16 different subunits, 5 of which are encoded in the nucleus.

Its subcellular location is the plastid. It localises to the chloroplast thylakoid membrane. It carries out the reaction a plastoquinone + NADH + (n+1) H(+)(in) = a plastoquinol + NAD(+) + n H(+)(out). It catalyses the reaction a plastoquinone + NADPH + (n+1) H(+)(in) = a plastoquinol + NADP(+) + n H(+)(out). NDH shuttles electrons from NAD(P)H:plastoquinone, via FMN and iron-sulfur (Fe-S) centers, to quinones in the photosynthetic chain and possibly in a chloroplast respiratory chain. The immediate electron acceptor for the enzyme in this species is believed to be plastoquinone. Couples the redox reaction to proton translocation, and thus conserves the redox energy in a proton gradient. This chain is NAD(P)H-quinone oxidoreductase subunit 2 B, chloroplastic, found in Daucus carota (Wild carrot).